The primary structure comprises 399 residues: Chorismate synthase (399 aa).

NADP(+) contacts are provided by Arg-40 and Arg-46. Residues 134-136 (RAS), 255-256 (QA), Gly-299, 314-318 (KPIST), and Arg-340 each bind FMN.

Belongs to the chorismate synthase family. As to quaternary structure, homotetramer. It depends on FMNH2 as a cofactor.

The catalysed reaction is 5-O-(1-carboxyvinyl)-3-phosphoshikimate = chorismate + phosphate. The protein operates within metabolic intermediate biosynthesis; chorismate biosynthesis; chorismate from D-erythrose 4-phosphate and phosphoenolpyruvate: step 7/7. Functionally, catalyzes the anti-1,4-elimination of the C-3 phosphate and the C-6 proR hydrogen from 5-enolpyruvylshikimate-3-phosphate (EPSP) to yield chorismate, which is the branch point compound that serves as the starting substrate for the three terminal pathways of aromatic amino acid biosynthesis. This reaction introduces a second double bond into the aromatic ring system. This chain is Chorismate synthase, found in Mycolicibacterium smegmatis (strain ATCC 700084 / mc(2)155) (Mycobacterium smegmatis).